A 238-amino-acid polypeptide reads, in one-letter code: 2-phytyl-1,4-naphtoquinone methyltransferase (238 aa).

It belongs to the class I-like SAM-binding methyltransferase superfamily. MenG/UbiE family.

The catalysed reaction is demethylphylloquinol + S-adenosyl-L-methionine = phylloquinol + S-adenosyl-L-homocysteine + H(+). Its pathway is cofactor biosynthesis; phylloquinone biosynthesis. Its function is as follows. Methyltransferase required for the conversion of 2-phytyl-1,4-beta-naphthoquinol to phylloquinol. This Synechocystis sp. (strain ATCC 27184 / PCC 6803 / Kazusa) protein is 2-phytyl-1,4-naphtoquinone methyltransferase.